Consider the following 118-residue polypeptide: Group 1 truncated hemoglobin GlbN (118 aa).

Histidine 70 is a heme binding site.

The protein belongs to the truncated hemoglobin family. Group I subfamily. As to quaternary structure, monomer. Requires heme as cofactor.

The protein localises to the membrane. The chain is Group 1 truncated hemoglobin GlbN (glbN) from Nostoc commune.